We begin with the raw amino-acid sequence, 148 residues long: UPF0251 protein Cbei_2962 (148 aa).

This sequence belongs to the UPF0251 family.

The polypeptide is UPF0251 protein Cbei_2962 (Clostridium beijerinckii (strain ATCC 51743 / NCIMB 8052) (Clostridium acetobutylicum)).